The primary structure comprises 149 residues: Phosphoribosyl-AMP cyclohydrolase (149 aa).

D92 contributes to the Mg(2+) binding site. C93 is a Zn(2+) binding site. D94 and D96 together coordinate Mg(2+). The Zn(2+) site is built by C111 and C118.

The protein belongs to the PRA-CH family. Homodimer. Requires Mg(2+) as cofactor. Zn(2+) is required as a cofactor.

It is found in the cytoplasm. It carries out the reaction 1-(5-phospho-beta-D-ribosyl)-5'-AMP + H2O = 1-(5-phospho-beta-D-ribosyl)-5-[(5-phospho-beta-D-ribosylamino)methylideneamino]imidazole-4-carboxamide. Its pathway is amino-acid biosynthesis; L-histidine biosynthesis; L-histidine from 5-phospho-alpha-D-ribose 1-diphosphate: step 3/9. Functionally, catalyzes the hydrolysis of the adenine ring of phosphoribosyl-AMP. The polypeptide is Phosphoribosyl-AMP cyclohydrolase (Rhizobium rhizogenes (strain K84 / ATCC BAA-868) (Agrobacterium radiobacter)).